The chain runs to 427 residues: Caspase recruitment domain-containing protein 8 (427 aa).

A disordered region spans residues 1–23 (MGIPTSSVSEEQESSEGQDSGDI). The interval 51-186 (FLGPEGNVDV…FYAVLEKPSF (136 aa)) is ZU5. The FIIND domain occupies 51–336 (FLGPEGNVDV…IQLGAASAPP (286 aa)). A UPA region spans residues 187 to 336 (SLMGILLRIA…IQLGAASAPP (150 aa)). In terms of domain architecture, CARD spans 336–426 (PAFSGAAFVK…YLVSYLRQQS (91 aa)).

In terms of assembly, interacts with DPP9; leading to inhibit activation of the inflammasome. DPP9 acts via formation of a ternary complex, composed of a DPP9 homodimer, one full-length CARD8 protein, and one cleaved C-terminus of CARD8 (Caspase recruitment domain-containing protein 8, C-terminus). Interacts with DPP8; leading to inhibit activation of the inflammasome, probably via formation of a ternary complex with DPP8. Interacts with NLRP3. Interacts with IKBKG/NEMO. Interacts with DRAL. Binds to caspase-1 (CASP1), CARD16/pseudo-ICE and CARD18/ICEBERG. Interacts with NLRP2 (via NACHT domain). As to quaternary structure, interacts with the C-terminal part of CARD8 (Caspase recruitment domain-containing protein 8, C-terminus) in absence of pathogens and other damage-associated signals. Interacts with the N-terminal part of CARD8 (Caspase recruitment domain-containing protein 8, N-terminus) in absence of pathogens and other damage-associated signals. Homomultimer; forms the CARD8 inflammasome polymeric complex, a filament composed of homopolymers of this form in response to pathogens and other damage-associated signals. The CARD8 inflammasome polymeric complex directly recruits pro-caspase-1 (proCASP1) independently of PYCARD/ASC. Interacts (via CARD domain) with CASP1 (via CARD domain); leading to CASP1 activation. Undergoes autocatalytic processing within the FIIND domain to generate the N-terminal and C-terminal parts, which are associated non-covalently in absence of pathogens and other damage-associated signals. In terms of processing, ubiquitinated by the N-end rule pathway in response to pathogens and other damage-associated signals, leading to its degradation by the proteasome and subsequent release of the cleaved C-terminal part of the protein (Caspase recruitment domain-containing protein 8, C-terminus), which polymerizes and forms the CARD8 inflammasome.

Its subcellular location is the cytoplasm. It localises to the nucleus. The protein localises to the inflammasome. Its activity is regulated as follows. CARD8 inflammasome is inhibited by DPP8 and DPP9, which sequester the C-terminal fragment of CARD8 (Caspase recruitment domain-containing protein 8, C-terminus) in a ternary complex, thereby preventing CARD8 oligomerization and activation. CARD8 inflammasome is activated by Val-boroPro (Talabostat, PT-100), an inhibitor of dipeptidyl peptidases DPP8 and DPP9. Val-boroPro relieves inhibition of DPP8 and/or DPP9 by inducing the proteasome-mediated destruction of the N-terminal part of CARD8, releasing its C-terminal part from autoinhibition. In terms of biological role, inflammasome sensor, which mediates inflammasome activation in response to various pathogen-associated signals, leading to subsequent pyroptosis of CD4(+) T-cells and macrophages. Inflammasomes are supramolecular complexes that assemble in the cytosol in response to pathogens and other damage-associated signals and play critical roles in innate immunity and inflammation. Acts as a recognition receptor (PRR): recognizes specific pathogens and other damage-associated signals, such as Val-boroPro inhibitor, and mediates CARD8 inflammasome activation. In response to pathogen-associated signals, the N-terminal part of CARD8 is degraded by the proteasome, releasing the cleaved C-terminal part of the protein (Caspase recruitment domain-containing protein 8, C-terminus), which polymerizes to initiate the formation of the inflammasome complex: the CARD8 inflammasome directly recruits pro-caspase-1 (proCASP1) independently of PYCARD/ASC and promotes caspase-1 (CASP1) activation, which subsequently cleaves and activates inflammatory cytokines IL1B and IL18 and gasdermin-D (GSDMD), leading to pyroptosis. Also acts as a negative regulator of the NLRP3 inflammasome. May also act as an inhibitor of NF-kappa-B activation. Its function is as follows. Constitutes the precursor of the CARD8 inflammasome, which mediates autoproteolytic processing within the FIIND domain to generate the N-terminal and C-terminal parts, which are associated non-covalently in absence of pathogens and other damage-associated signals. Regulatory part that prevents formation of the CARD8 inflammasome: in absence of pathogens and other damage-associated signals, interacts with the C-terminal part of CARD8 (Caspase recruitment domain-containing protein 8, C-terminus), preventing activation of the CARD8 inflammasome. In response to pathogen-associated signals, this part is ubiquitinated by the N-end rule pathway and degraded by the proteasome, releasing the cleaved C-terminal part of the protein, which polymerizes and forms the CARD8 inflammasome. Functionally, constitutes the active part of the CARD8 inflammasome. In absence of pathogens and other damage-associated signals, interacts with the N-terminal part of CARD8 (Caspase recruitment domain-containing protein 8, N-terminus), preventing activation of the CARD8 inflammasome. In response to pathogen-associated signals, the N-terminal part of CARD8 is degraded by the proteasome, releasing this form, which polymerizes to form the CARD8 inflammasome complex: the CARD8 inflammasome complex then directly recruits pro-caspase-1 (proCASP1) and promotes caspase-1 (CASP1) activation, leading to gasdermin-D (GSDMD) cleavage and subsequent pyroptosis. This is Caspase recruitment domain-containing protein 8 from Pongo abelii (Sumatran orangutan).